A 454-amino-acid chain; its full sequence is MSIRVQKTFEALFELEEIRGIFRDSLPTGLSAEEEAAFRQRIGNLKAIVADLEAGTGTPKVTKIAGTLDVRSREEQYINIHPIQAAGRLTTEARKAIISYGDGYSTCDACRKPFRLDKISKPGIAEFHADLAKWLNMDHARVVPGARRGFQAVTGTLVNKGDSVIVSALAHYTEFLSVENAGGVIKEVPLNAKNIVTGEATAQKIEEVKTETGKLPVLVMIDHFDYQFANEHEIREIGKVAHQYDIPFLYNGAYTVGVQPVDGKKIGADFVVGSGHKSMASVAPSGVLATTKEWAPKALRTTAIVGDLTKRKFGIKEVELLGCTLMGGTLLSMIASFPAVKERVLHWDEQVKRSNYFIDRLLKISGSRVLSEYPRRHTLTKVDTTGSFDTVAKTHKRRGFYFSDELSSRGIVGEFAGATRTWKLNTYGLSEKQVHYLADAFTEIAEKFELPVTK.

Pyridoxal 5'-phosphate-binding positions include 146 to 147 (AR), N251, and 274 to 276 (SGH). N6-(pyridoxal phosphate)lysine is present on K277.

This sequence belongs to the SepCysS family. In terms of assembly, homodimer. Interacts with SepRS. Pyridoxal 5'-phosphate serves as cofactor.

It carries out the reaction O-phospho-L-seryl-tRNA(Cys) + hydrogen sulfide + H(+) = L-cysteinyl-tRNA(Cys) + phosphate. In terms of biological role, converts O-phospho-L-seryl-tRNA(Cys) (Sep-tRNA(Cys)) to L-cysteinyl-tRNA(Cys) (Cys-tRNA(Cys)). This is O-phospho-L-seryl-tRNA:Cys-tRNA synthase 2 from Methanoregula boonei (strain DSM 21154 / JCM 14090 / 6A8).